The primary structure comprises 424 residues: Enolase (424 aa).

Residue Q165 coordinates (2R)-2-phosphoglycerate. The active-site Proton donor is the E207. Mg(2+)-binding residues include D244, E283, and D310. K335, R364, S365, and K386 together coordinate (2R)-2-phosphoglycerate. Residue K335 is the Proton acceptor of the active site.

This sequence belongs to the enolase family. Mg(2+) is required as a cofactor.

It localises to the cytoplasm. The protein resides in the secreted. The protein localises to the cell surface. It carries out the reaction (2R)-2-phosphoglycerate = phosphoenolpyruvate + H2O. The protein operates within carbohydrate degradation; glycolysis; pyruvate from D-glyceraldehyde 3-phosphate: step 4/5. In terms of biological role, catalyzes the reversible conversion of 2-phosphoglycerate (2-PG) into phosphoenolpyruvate (PEP). It is essential for the degradation of carbohydrates via glycolysis. The chain is Enolase from Chlamydia muridarum (strain MoPn / Nigg).